The sequence spans 418 residues: MFKDISIKDFDPVLAEAMAAESVRQENHIELIASENYCSQAVMEAQGTDLTNKYAEGYPGKRYYGGCEHVDVVEQLAIDRAKELFGAEYVNVQPHSGSQANSAVFLALLEANDTVLGMSLDAGGHLTHGAHINFSGLNYNAVQYGLVEGTGLIDYDQVESLAKEHKPKMIIAGFSAYSQVVDWARFREIADEVGAYLLVDMAHVAGLIAGGVYPSPVPFADVVTTTTHKTLRGPRSGMILARDEVLAKKLNSAVFPGNQGGPLMHVIAAKAVCFKEALEENFKTYQQQVVKNAQAMAKVIQDRGYEIISGGTENHLMLISLVKQEMTGKEADKWLGDAHITVNKNAVPNDPKSPFVTSGIRIGTPAITTRGFNEAQAGDLAGWICDVLDSRGDEAVTAEVRGKVEAICKELPVYAKNQ.

Residues L120 and 124 to 126 (GHL) contribute to the (6S)-5,6,7,8-tetrahydrofolate site. The residue at position 229 (K229) is an N6-(pyridoxal phosphate)lysine. (6S)-5,6,7,8-tetrahydrofolate is bound at residue 353–355 (SPF).

The protein belongs to the SHMT family. In terms of assembly, homodimer. It depends on pyridoxal 5'-phosphate as a cofactor.

Its subcellular location is the cytoplasm. It carries out the reaction (6R)-5,10-methylene-5,6,7,8-tetrahydrofolate + glycine + H2O = (6S)-5,6,7,8-tetrahydrofolate + L-serine. The protein operates within one-carbon metabolism; tetrahydrofolate interconversion. It participates in amino-acid biosynthesis; glycine biosynthesis; glycine from L-serine: step 1/1. Its function is as follows. Catalyzes the reversible interconversion of serine and glycine with tetrahydrofolate (THF) serving as the one-carbon carrier. This reaction serves as the major source of one-carbon groups required for the biosynthesis of purines, thymidylate, methionine, and other important biomolecules. Also exhibits THF-independent aldolase activity toward beta-hydroxyamino acids, producing glycine and aldehydes, via a retro-aldol mechanism. In Psychrobacter cryohalolentis (strain ATCC BAA-1226 / DSM 17306 / VKM B-2378 / K5), this protein is Serine hydroxymethyltransferase.